Reading from the N-terminus, the 348-residue chain is MKKTDELRTIRIDPLVTPAELAQRHVITPSIMDTVISTRKNIANIMTGLDPRLLVIIGPCSVHDPVAAVEYAGRLQVLRKKYESRLEIVMRTYFEKPRTVIGWKGLISDPDLNGSFHVNNGLSIARKLLLDINKLGVPAATEFLDMVIGQFIADLISWGAIGARTTESQIHREMASALSCPVGFKNGTDGNIRIAVDAIRAASVEHLFLAPNKYGQMTINYTSGNPFGHVIMRGGKSPNYHAKDIAIAIKYLHEFTLSEYLMIDFSHGNCLKQHRRQLDVGESIAKQIRDGSTAIFGVMIESFLEEGSQKVIDNKSLVYGKSITDPCLGWNDSAFLLEKLANAVDSRF.

It belongs to the class-I DAHP synthase family.

It carries out the reaction D-erythrose 4-phosphate + phosphoenolpyruvate + H2O = 7-phospho-2-dehydro-3-deoxy-D-arabino-heptonate + phosphate. The protein operates within metabolic intermediate biosynthesis; chorismate biosynthesis; chorismate from D-erythrose 4-phosphate and phosphoenolpyruvate: step 1/7. In terms of biological role, stereospecific condensation of phosphoenolpyruvate (PEP) and D-erythrose-4-phosphate (E4P) giving rise to 3-deoxy-D-arabino-heptulosonate-7-phosphate (DAHP). The polypeptide is Phospho-2-dehydro-3-deoxyheptonate aldolase, Trp-sensitive (aroH) (Buchnera aphidicola subsp. Baizongia pistaciae (strain Bp)).